A 111-amino-acid chain; its full sequence is DIVLTQSPASLAVSLGQRATISCRASESVDNSGISFMNWFQQKPGQPPKLLIYAASNQGSGVPARFSGSGSGTDFSLNIHPMEEDDTAMYFCQQSKEVPWTFGGGTKLEIK.

The interval 1-23 (DIVLTQSPASLAVSLGQRATISC) is framework-1. C23 and C92 form a disulfide bridge. The segment at 24–38 (RASESVDNSGISFMN) is complementarity-determining-1. Positions 39–53 (WFQQKPGQPPKLLIY) are framework-2. The segment at 54–60 (AASNQGS) is complementarity-determining-2. The framework-3 stretch occupies residues 61–92 (GVPARFSGSGSGTDFSLNIHPMEEDDTAMYFC). The tract at residues 93–101 (QQSKEVPWT) is complementarity-determining-3. The framework-4 stretch occupies residues 102–111 (FGGGTKLEIK).

The protein is Ig kappa chain V-III region MOPC 70 of Mus musculus (Mouse).